Here is a 396-residue protein sequence, read N- to C-terminus: Elongation factor Tu (396 aa).

The tr-type G domain maps to 10–206; sequence KPHVNVGTIG…ALDTYIPTPE (197 aa). Residues 19-26 form a G1 region; it reads GHVDHGKT. 19 to 26 contacts GTP; sequence GHVDHGKT. T26 is a binding site for Mg(2+). Residues 60-64 are G2; sequence GITIN. Residues 81 to 84 are G3; sequence DCPG. Residues 81–85 and 136–139 each bind GTP; these read DCPGH and NKAD. A G4 region spans residues 136 to 139; that stretch reads NKAD. The G5 stretch occupies residues 174-176; it reads SAK.

Belongs to the TRAFAC class translation factor GTPase superfamily. Classic translation factor GTPase family. EF-Tu/EF-1A subfamily. In terms of assembly, monomer.

It localises to the cytoplasm. The enzyme catalyses GTP + H2O = GDP + phosphate + H(+). Its function is as follows. GTP hydrolase that promotes the GTP-dependent binding of aminoacyl-tRNA to the A-site of ribosomes during protein biosynthesis. This Janthinobacterium sp. (strain Marseille) (Minibacterium massiliensis) protein is Elongation factor Tu.